The chain runs to 203 residues: Probable proteasome subunit beta type-4 (203 aa).

Belongs to the peptidase T1B family. As to quaternary structure, the 26S proteasome consists of a 20S proteasome core and two 19S regulatory subunits. The 20S proteasome core is composed of 28 subunits that are arranged in four stacked rings, resulting in a barrel-shaped structure. The two end rings are each formed by seven alpha subunits, and the two central rings are each formed by seven beta subunits. The catalytic chamber with the active sites is on the inside of the barrel.

The protein resides in the cytoplasm. The protein localises to the nucleus. Functionally, non-catalytic component of the proteasome, a multicatalytic proteinase complex which is characterized by its ability to cleave peptides with Arg, Phe, Tyr, Leu, and Glu adjacent to the leaving group at neutral or slightly basic pH. The proteasome has an ATP-dependent proteolytic activity. This chain is Probable proteasome subunit beta type-4 (pcb-4), found in Neurospora crassa (strain ATCC 24698 / 74-OR23-1A / CBS 708.71 / DSM 1257 / FGSC 987).